Here is a 445-residue protein sequence, read N- to C-terminus: Argininosuccinate synthase (445 aa).

ATP-binding positions include 17–25 and Ala-43; that span reads AFSGGLDTS. Tyr-99 is an L-citrulline binding site. 2 residues coordinate ATP: Gly-129 and Thr-131. Thr-131, Asn-135, and Asp-136 together coordinate L-aspartate. L-citrulline is bound at residue Asn-135. Asp-136 contacts ATP. Residues Arg-139 and Ser-192 each coordinate L-citrulline. Asp-194 lines the ATP pocket. L-citrulline-binding residues include Thr-201, Glu-203, and Glu-280.

This sequence belongs to the argininosuccinate synthase family. Type 2 subfamily. Homotetramer.

Its subcellular location is the cytoplasm. It catalyses the reaction L-citrulline + L-aspartate + ATP = 2-(N(omega)-L-arginino)succinate + AMP + diphosphate + H(+). Its pathway is amino-acid biosynthesis; L-arginine biosynthesis; L-arginine from L-ornithine and carbamoyl phosphate: step 2/3. This chain is Argininosuccinate synthase, found in Herminiimonas arsenicoxydans.